Consider the following 438-residue polypeptide: tRNA modification GTPase MnmE (438 aa).

(6S)-5-formyl-5,6,7,8-tetrahydrofolate is bound by residues Arg20, Glu76, and Lys115. The 161-residue stretch at 210–370 (NFTIMILGRR…LKCFINKIVD (161 aa)) folds into the TrmE-type G domain. Asn220 provides a ligand contact to K(+). GTP-binding positions include 220 to 225 (NVGKST), 239 to 245 (TNIPGTT), and 264 to 267 (DTAG). Ser224 contributes to the Mg(2+) binding site. Residues Thr239, Ile241, and Thr244 each coordinate K(+). Thr245 provides a ligand contact to Mg(2+). (6S)-5-formyl-5,6,7,8-tetrahydrofolate is bound at residue Lys438.

It belongs to the TRAFAC class TrmE-Era-EngA-EngB-Septin-like GTPase superfamily. TrmE GTPase family. As to quaternary structure, homodimer. Heterotetramer of two MnmE and two MnmG subunits. Requires K(+) as cofactor.

The protein localises to the cytoplasm. In terms of biological role, exhibits a very high intrinsic GTPase hydrolysis rate. Involved in the addition of a carboxymethylaminomethyl (cmnm) group at the wobble position (U34) of certain tRNAs, forming tRNA-cmnm(5)s(2)U34. This chain is tRNA modification GTPase MnmE, found in Carsonella ruddii (strain PV).